We begin with the raw amino-acid sequence, 245 residues long: Eukaryotic translation initiation factor 6 (245 aa).

This sequence belongs to the eIF-6 family. As to quaternary structure, monomer. Associates with the 60S ribosomal subunit.

It localises to the cytoplasm. Its subcellular location is the nucleus. The protein localises to the nucleolus. In terms of biological role, binds to the 60S ribosomal subunit and prevents its association with the 40S ribosomal subunit to form the 80S initiation complex in the cytoplasm. May also be involved in ribosome biogenesis. This is Eukaryotic translation initiation factor 6 from Tetrahymena thermophila (strain SB210).